The chain runs to 82 residues: Small ribosomal subunit protein bS16 (82 aa).

The protein belongs to the bacterial ribosomal protein bS16 family.

In Pasteurella multocida (strain Pm70), this protein is Small ribosomal subunit protein bS16.